The primary structure comprises 118 residues: Small ribosomal subunit protein uS13 (118 aa).

Positions 93–118 are disordered; the sequence is KGLPVRGQRTKTNARTRKGPRKPIRK.

This sequence belongs to the universal ribosomal protein uS13 family. In terms of assembly, part of the 30S ribosomal subunit. Forms a loose heterodimer with protein S19. Forms two bridges to the 50S subunit in the 70S ribosome.

Functionally, located at the top of the head of the 30S subunit, it contacts several helices of the 16S rRNA. In the 70S ribosome it contacts the 23S rRNA (bridge B1a) and protein L5 of the 50S subunit (bridge B1b), connecting the 2 subunits; these bridges are implicated in subunit movement. Contacts the tRNAs in the A and P-sites. This chain is Small ribosomal subunit protein uS13, found in Ectopseudomonas mendocina (strain ymp) (Pseudomonas mendocina).